A 454-amino-acid chain; its full sequence is tRNA-2-methylthio-N(6)-dimethylallyladenosine synthase (454 aa).

In terms of domain architecture, MTTase N-terminal spans 6–122; it reads RRYHITTFGC…LKDLLESVFA (117 aa). The [4Fe-4S] cluster site is built by C15, C51, C85, C157, C161, and C164. Residues 143–380 form the Radical SAM core domain; it reads RDSTVTAWVN…NHLVNVKAAE (238 aa). The 65-residue stretch at 383–447 folds into the TRAM domain; it reads QRYMGRIEEV…AFSLTGEPIE (65 aa).

It belongs to the methylthiotransferase family. MiaB subfamily. In terms of assembly, monomer. [4Fe-4S] cluster is required as a cofactor.

It localises to the cytoplasm. The enzyme catalyses N(6)-dimethylallyladenosine(37) in tRNA + (sulfur carrier)-SH + AH2 + 2 S-adenosyl-L-methionine = 2-methylsulfanyl-N(6)-dimethylallyladenosine(37) in tRNA + (sulfur carrier)-H + 5'-deoxyadenosine + L-methionine + A + S-adenosyl-L-homocysteine + 2 H(+). Functionally, catalyzes the methylthiolation of N6-(dimethylallyl)adenosine (i(6)A), leading to the formation of 2-methylthio-N6-(dimethylallyl)adenosine (ms(2)i(6)A) at position 37 in tRNAs that read codons beginning with uridine. In Nostoc sp. (strain PCC 7120 / SAG 25.82 / UTEX 2576), this protein is tRNA-2-methylthio-N(6)-dimethylallyladenosine synthase.